A 67-amino-acid polypeptide reads, in one-letter code: Beta-defensin 103A (67 aa).

The N-terminal stretch at 1 to 22 (MRIHFLLFALLFLFLMPVPGNG) is a signal peptide. Disulfide bonds link Cys33-Cys62, Cys40-Cys55, and Cys45-Cys63.

The protein belongs to the beta-defensin family.

Its subcellular location is the secreted. Its function is as follows. Exhibits antimicrobial activity against Gram-positive and Gram-negative bacteria. The chain is Beta-defensin 103A (DEFB103A) from Equus caballus (Horse).